Consider the following 364-residue polypeptide: Probable UDP-arabinopyranose mutase 4 (364 aa).

The short motif at 106–108 (DDD) is the DXD motif element. An N-linked (Glc...) arginine glycan is attached at Arg154.

Belongs to the RGP family. In terms of assembly, heteromers with RGP1 and RGP2. Requires Mn(2+) as cofactor. It depends on Mg(2+) as a cofactor. Reversibly glycosylated in vitro by UDP-glucose, UDP-xylose and UDP-galactose, but not UDP-mannose. Specifically expressed in developing seeds.

The protein resides in the cytoplasm. Its subcellular location is the cytosol. It localises to the golgi apparatus. It catalyses the reaction UDP-beta-L-arabinofuranose = UDP-beta-L-arabinopyranose. In terms of biological role, probable UDP-L-arabinose mutase involved in the biosynthesis of cell wall non-cellulosic polysaccharides. The polypeptide is Probable UDP-arabinopyranose mutase 4 (Arabidopsis thaliana (Mouse-ear cress)).